Consider the following 488-residue polypeptide: MTFNNKTIEELHNLLVSKEISATELTQATLENIKSREEALNSFVTIAEEQALVQAKAIDEAGIDADNVLSGIPLAVKDNISTDGILTTAASKMLYNYEPIFDATAVANAKTKGMIVVGKTNMDEFAMGGSGETSHYGATKNAWDHSKVPGGSSSGSAAAVASGQVRLSLGSDTGGSIRQPAAFNGIVGLKPTYGTVSRFGLIAFGSSLDQIGPFAPTVKENALLLNAIASEDAKDSTSAPVRIADFTSKIGQDIKGMKIALPKEYLGEGIDPEVKETILNAAKHFEKLGAIVEEVSLPHSKYGVAVYYIIASSEASSNLQRFDGIRYGYRAEDATNLDEIYVNSRSQGFGEEVKRRIMLGTFSLSSGYYDAYYKKAGQVRTLIIQDFEKVFADYDLILGPTAPSVAYDLDSLNHDPVAMYLADLLTIPVNLAGLPGISIPAGFSQGLPVGLQLIGPKHSEETIYQVAAAFEATTGYHKQQPVIFGGDN.

Active-site charge relay system residues include K77 and S152. Residue S176 is the Acyl-ester intermediate of the active site.

It belongs to the amidase family. GatA subfamily. Heterotrimer of A, B and C subunits.

It carries out the reaction L-glutamyl-tRNA(Gln) + L-glutamine + ATP + H2O = L-glutaminyl-tRNA(Gln) + L-glutamate + ADP + phosphate + H(+). Its function is as follows. Allows the formation of correctly charged Gln-tRNA(Gln) through the transamidation of misacylated Glu-tRNA(Gln) in organisms which lack glutaminyl-tRNA synthetase. The reaction takes place in the presence of glutamine and ATP through an activated gamma-phospho-Glu-tRNA(Gln). The sequence is that of Glutamyl-tRNA(Gln) amidotransferase subunit A from Streptococcus pneumoniae (strain ATCC 700669 / Spain 23F-1).